The chain runs to 31 residues: PTEN upstream open reading frame MP31 (31 aa).

In terms of assembly, interacts with lactate dehydrogenases LDHA and LDHB; interaction with mitochondrial LDH leads to inhibition of lactate dehydrogenase activity, preventing conversion of lactate to pyruvate. As to expression, expressed in brain (at protein level). Expressed at lower levels in glioblastomas than in normal brain tissue (at protein level).

It localises to the mitochondrion. Its function is as follows. Inhibits lactate dehydrogenase (LDH)-mediated conversion of lactate to pyruvate in mitochondria by competing with mitochondrial LDH for binding to NAD(+). Also inhibits cellular lactate utilization. In Homo sapiens (Human), this protein is PTEN upstream open reading frame MP31.